Reading from the N-terminus, the 144-residue chain is D-aminoacyl-tRNA deacylase (144 aa).

The short motif at Gly-137–Pro-138 is the Gly-cisPro motif, important for rejection of L-amino acids element.

This sequence belongs to the DTD family. As to quaternary structure, homodimer.

Its subcellular location is the cytoplasm. It carries out the reaction glycyl-tRNA(Ala) + H2O = tRNA(Ala) + glycine + H(+). The catalysed reaction is a D-aminoacyl-tRNA + H2O = a tRNA + a D-alpha-amino acid + H(+). Functionally, an aminoacyl-tRNA editing enzyme that deacylates mischarged D-aminoacyl-tRNAs. Also deacylates mischarged glycyl-tRNA(Ala), protecting cells against glycine mischarging by AlaRS. Acts via tRNA-based rather than protein-based catalysis; rejects L-amino acids rather than detecting D-amino acids in the active site. By recycling D-aminoacyl-tRNA to D-amino acids and free tRNA molecules, this enzyme counteracts the toxicity associated with the formation of D-aminoacyl-tRNA entities in vivo and helps enforce protein L-homochirality. The protein is D-aminoacyl-tRNA deacylase of Acinetobacter baumannii (strain SDF).